Reading from the N-terminus, the 171-residue chain is Peptide methionine sulfoxide reductase MsrA (171 aa).

The active site involves Cys-12.

This sequence belongs to the MsrA Met sulfoxide reductase family.

The catalysed reaction is L-methionyl-[protein] + [thioredoxin]-disulfide + H2O = L-methionyl-(S)-S-oxide-[protein] + [thioredoxin]-dithiol. The enzyme catalyses [thioredoxin]-disulfide + L-methionine + H2O = L-methionine (S)-S-oxide + [thioredoxin]-dithiol. Its function is as follows. Has an important function as a repair enzyme for proteins that have been inactivated by oxidation. Catalyzes the reversible oxidation-reduction of methionine sulfoxide in proteins to methionine. This is Peptide methionine sulfoxide reductase MsrA from Leuconostoc mesenteroides subsp. mesenteroides (strain ATCC 8293 / DSM 20343 / BCRC 11652 / CCM 1803 / JCM 6124 / NCDO 523 / NBRC 100496 / NCIMB 8023 / NCTC 12954 / NRRL B-1118 / 37Y).